Here is a 137-residue protein sequence, read N- to C-terminus: Immunoglobulin domain-containing protein oig-1 (137 aa).

A signal peptide spans 1–23; sequence MFSELRILRDILLLCFLSVGINA. Residues 41–133 enclose the Ig-like C2-type domain; it reads PKISRSSYFK…KGSRVKKFLT (93 aa). Cysteines 63 and 118 form a disulfide.

Expressed in DD and VD GABAergic motor neurons. Expressed in a subset of head neurons including M2 motor neurons in the pharynx. Expressed in coelomocytes.

It localises to the membrane. The protein resides in the secreted. Its subcellular location is the extracellular space. The protein localises to the cell projection. It is found in the dendrite. It localises to the axon. In terms of biological role, plays a role in neural development, where it temporally regulates synapse formation in the D-type inhibitory GABAergic motor neurons, dorsal D (DD) and ventral D (VD) motor neurons. Controls the translocation of postsynaptic proteins, such as the acetylcholine receptor subunit acr-12, and presynaptic proteins, such as snb-1, along nerve cords to prevent premature synapse remodeling/formation. This is Immunoglobulin domain-containing protein oig-1 from Caenorhabditis elegans.